Consider the following 837-residue polypeptide: A disintegrin and metalloproteinase with thrombospondin motifs 4 (837 aa).

An N-terminal signal peptide occupies residues 1–51; that stretch reads MSQTGSHPGRGLAGRWLWGAQPCLLLPIVPLSWLVWLLLLLLASLLPSARL. Residues 52–212 constitute a propeptide that is removed on maturation; sequence ASPLPREEEI…PSPRPRRAKR (161 aa). An N-linked (GlcNAc...) asparagine glycan is attached at N68. Residues 192 to 199 carry the Cysteine switch motif; sequence PMCNVKAP. C194 is a Zn(2+) binding site. A Peptidase M12B domain is found at 218 to 428; the sequence is RFVETLVVAD…GYGHCLLDKP (211 aa). Cystine bridges form between C293–C345, C322–C327, C339–C423, C377–C407, C449–C472, C460–C482, C467–C501, C495–C506, C532–C569, C536–C574, and C547–C559. Residue H361 coordinates Zn(2+). E362 is an active-site residue. Positions 365 and 371 each coordinate Zn(2+). Residues 437 to 519 form the Disintegrin domain; that stretch reads TFPGKDYDAD…DQLQDFNIPQ (83 aa). Residues 520–575 enclose the TSP type-1 domain; the sequence is AGGWGPWGPWGDCSRTCGGGVQFSSRDCTRPVPRNGGKYCEGRRTRFRSCNTEDCP. The interval 686–837 is spacer; sequence SKQSGSFRKF…LRRRPWAGRK (152 aa).

Interacts with SRPX2. Requires Zn(2+) as cofactor. The precursor is cleaved by a furin endopeptidase. Post-translationally, glycosylated. Can be O-fucosylated by POFUT2 on a serine or a threonine residue found within the consensus sequence C1-X(2)-(S/T)-C2-G of the TSP type-1 repeat domains where C1 and C2 are the first and second cysteine residue of the repeat, respectively. Fucosylated repeats can then be further glycosylated by the addition of a beta-1,3-glucose residue by the glucosyltransferase, B3GALTL. Fucosylation mediates the efficient secretion of ADAMTS family members. Can also be C-glycosylated with one or two mannose molecules on tryptophan residues within the consensus sequence W-X-X-W of the TPRs, and N-glycosylated. These other glycosylations can also facilitate secretion. Expressed in brain, lung and heart. Expressed at very low level in placenta and skeletal muscles. Isoform 2: Detected in osteoarthritic synovium.

Its subcellular location is the secreted. The protein resides in the extracellular space. It is found in the extracellular matrix. The enzyme catalyses Glutamyl endopeptidase. Bonds cleaved include 370-Thr-Glu-Gly-Glu-|-Ala-Arg-Gly-Ser-377 in the interglobular domain of mammalian aggrecan.. Cleaves aggrecan, a cartilage proteoglycan, at the '392-Glu-|-Ala-393' site and may be involved in its turnover. Also cleaves COMP. May play an important role in the destruction of aggrecan in arthritic diseases. Could be a critical factor in the exacerbation of neurodegeneration in Alzheimer disease. The chain is A disintegrin and metalloproteinase with thrombospondin motifs 4 (ADAMTS4) from Homo sapiens (Human).